Consider the following 225-residue polypeptide: Uracil-DNA glycosylase (225 aa).

Catalysis depends on Asp68, which acts as the Proton acceptor.

The protein belongs to the uracil-DNA glycosylase (UDG) superfamily. UNG family.

The protein resides in the cytoplasm. It catalyses the reaction Hydrolyzes single-stranded DNA or mismatched double-stranded DNA and polynucleotides, releasing free uracil.. Excises uracil residues from the DNA which can arise as a result of misincorporation of dUMP residues by DNA polymerase or due to deamination of cytosine. This Mycolicibacterium vanbaalenii (strain DSM 7251 / JCM 13017 / BCRC 16820 / KCTC 9966 / NRRL B-24157 / PYR-1) (Mycobacterium vanbaalenii) protein is Uracil-DNA glycosylase.